A 387-amino-acid polypeptide reads, in one-letter code: Homoserine O-succinyltransferase (387 aa).

In terms of domain architecture, AB hydrolase-1 spans Asn49–Leu358. Ser156 (nucleophile) is an active-site residue. Arg226 is a binding site for substrate. Active-site residues include Asp321 and His354. Substrate is bound at residue Asp355.

Belongs to the AB hydrolase superfamily. MetX family. In terms of assembly, homodimer.

It is found in the cytoplasm. The catalysed reaction is L-homoserine + succinyl-CoA = O-succinyl-L-homoserine + CoA. Its pathway is amino-acid biosynthesis; L-methionine biosynthesis via de novo pathway; O-succinyl-L-homoserine from L-homoserine: step 1/1. Its activity is regulated as follows. Requires MetW for activity. Transfers a succinyl group from succinyl-CoA to L-homoserine, forming succinyl-L-homoserine. The protein is Homoserine O-succinyltransferase of Acinetobacter baylyi (strain ATCC 33305 / BD413 / ADP1).